Reading from the N-terminus, the 344-residue chain is tRNA N6-adenosine threonylcarbamoyltransferase (344 aa).

His-112 and His-116 together coordinate Fe cation. Substrate is bound by residues 135-139, Asp-168, Gly-181, and Asn-271; that span reads LVSGG. Asp-299 lines the Fe cation pocket. The segment at 323–344 is disordered; it reads RARPRWPLDPEAEPVRGAGVKA.

It belongs to the KAE1 / TsaD family. Fe(2+) is required as a cofactor.

Its subcellular location is the cytoplasm. It carries out the reaction L-threonylcarbamoyladenylate + adenosine(37) in tRNA = N(6)-L-threonylcarbamoyladenosine(37) in tRNA + AMP + H(+). In terms of biological role, required for the formation of a threonylcarbamoyl group on adenosine at position 37 (t(6)A37) in tRNAs that read codons beginning with adenine. Is involved in the transfer of the threonylcarbamoyl moiety of threonylcarbamoyl-AMP (TC-AMP) to the N6 group of A37, together with TsaE and TsaB. TsaD likely plays a direct catalytic role in this reaction. In Erythrobacter litoralis (strain HTCC2594), this protein is tRNA N6-adenosine threonylcarbamoyltransferase.